The chain runs to 265 residues: Sulfur carrier protein FdhD (265 aa).

Cys-107 (cysteine persulfide intermediate) is an active-site residue.

It belongs to the FdhD family.

Its subcellular location is the cytoplasm. Required for formate dehydrogenase (FDH) activity. Acts as a sulfur carrier protein that transfers sulfur from IscS to the molybdenum cofactor prior to its insertion into FDH. The sequence is that of Sulfur carrier protein FdhD from Staphylococcus aureus (strain NCTC 8325 / PS 47).